A 377-amino-acid chain; its full sequence is uncharacterized protein (377 aa).

The segment at 345 to 377 is disordered; that stretch reads VGPSPPAYEQVARSSPTDIPLPPPSCPTNVQRD.

This is an uncharacterized protein from Schizosaccharomyces pombe (strain 972 / ATCC 24843) (Fission yeast).